The primary structure comprises 207 residues: MEAIITKEFFEDKTTIELARDILGMRLVHQTDEGILSGLIVETEAYLGATDMAAHSFQNLRTKRTEVMFSSPGRIYMYQMHRQVLLNFITMPKGIPEAILIRAIEPDEQAKQQMVQNRHGKTGYELTNGPGKLTQALGLSMQDYGKTLFDSNIWLEEAKLPHLIEATNRIGVPNKGIATHFPLRFTVKGSPYISAQRKSRILTDIWK.

This sequence belongs to the DNA glycosylase MPG family.

The chain is Putative 3-methyladenine DNA glycosylase from Listeria monocytogenes serotype 4b (strain CLIP80459).